Consider the following 485-residue polypeptide: Probable glycine dehydrogenase (decarboxylating) subunit 2 (485 aa).

Lysine 273 carries the post-translational modification N6-(pyridoxal phosphate)lysine.

It belongs to the GcvP family. C-terminal subunit subfamily. The glycine cleavage system is composed of four proteins: P, T, L and H. In this organism, the P 'protein' is a heterodimer of two subunits. Pyridoxal 5'-phosphate serves as cofactor.

The enzyme catalyses N(6)-[(R)-lipoyl]-L-lysyl-[glycine-cleavage complex H protein] + glycine + H(+) = N(6)-[(R)-S(8)-aminomethyldihydrolipoyl]-L-lysyl-[glycine-cleavage complex H protein] + CO2. Its function is as follows. The glycine cleavage system catalyzes the degradation of glycine. The P protein binds the alpha-amino group of glycine through its pyridoxal phosphate cofactor; CO(2) is released and the remaining methylamine moiety is then transferred to the lipoamide cofactor of the H protein. The polypeptide is Probable glycine dehydrogenase (decarboxylating) subunit 2 (Caldanaerobacter subterraneus subsp. tengcongensis (strain DSM 15242 / JCM 11007 / NBRC 100824 / MB4) (Thermoanaerobacter tengcongensis)).